Reading from the N-terminus, the 1071-residue chain is Ubiquitin carboxyl-terminal hydrolase 7 (1071 aa).

The tract at residues 467–532 (KARLQQEQQQ…MPTTPEIPPP (66 aa)) is disordered. Residues 471-480 (QQEQQQQQQQ) are compositionally biased toward low complexity. Residues 481-495 (PDSQDSFSAKESSTK) show a composition bias toward polar residues. Composition is skewed to pro residues over residues 497–507 (PEPPSWKPPDL) and 516–532 (PPPP…IPPP). In terms of domain architecture, USP spans 609-1069 (TGLRNLGNTC…DVYVLFYERV (461 aa)). Cys618 acts as the Nucleophile in catalysis. A disordered region spans residues 913–942 (RMLGGSGKRSSSSTPFSTGGNDSNNSSDYK). The segment covering 920 to 932 (KRSSSSTPFSTGG) has biased composition (polar residues). His1014 serves as the catalytic Proton acceptor.

Belongs to the peptidase C19 family.

The protein localises to the cytoplasm. The enzyme catalyses Thiol-dependent hydrolysis of ester, thioester, amide, peptide and isopeptide bonds formed by the C-terminal Gly of ubiquitin (a 76-residue protein attached to proteins as an intracellular targeting signal).. Functionally, involved in the sorting of ubiquitinated cargo proteins at the multivesicular body (MVB). This chain is Ubiquitin carboxyl-terminal hydrolase 7 (UBP7), found in Saccharomyces cerevisiae (strain ATCC 204508 / S288c) (Baker's yeast).